The chain runs to 185 residues: Ribosome-recycling factor (185 aa).

Belongs to the RRF family.

It localises to the cytoplasm. Functionally, responsible for the release of ribosomes from messenger RNA at the termination of protein biosynthesis. May increase the efficiency of translation by recycling ribosomes from one round of translation to another. The chain is Ribosome-recycling factor from Sodalis glossinidius (strain morsitans).